The chain runs to 249 residues: Coproheme decarboxylase (249 aa).

Residues Arg131, 145 to 149, His172, Gln185, and Ser223 each bind Fe-coproporphyrin III; that span reads YPMDK. Tyr145 is an active-site residue.

It belongs to the ChdC family. Type 1 subfamily. Requires Fe-coproporphyrin III as cofactor.

It carries out the reaction Fe-coproporphyrin III + 2 H2O2 + 2 H(+) = heme b + 2 CO2 + 4 H2O. It catalyses the reaction Fe-coproporphyrin III + H2O2 + H(+) = harderoheme III + CO2 + 2 H2O. The catalysed reaction is harderoheme III + H2O2 + H(+) = heme b + CO2 + 2 H2O. Its pathway is porphyrin-containing compound metabolism; protoheme biosynthesis. Functionally, involved in coproporphyrin-dependent heme b biosynthesis. Catalyzes the decarboxylation of Fe-coproporphyrin III (coproheme) to heme b (protoheme IX), the last step of the pathway. The reaction occurs in a stepwise manner with a three-propionate intermediate. The polypeptide is Coproheme decarboxylase (Halalkalibacterium halodurans (strain ATCC BAA-125 / DSM 18197 / FERM 7344 / JCM 9153 / C-125) (Bacillus halodurans)).